Here is a 132-residue protein sequence, read N- to C-terminus: Hydrogenase maturation factor HypA (132 aa).

Residue His2 coordinates Ni(2+). Positions 74, 77, 91, and 94 each coordinate Zn(2+).

It belongs to the HypA/HybF family.

Its function is as follows. Involved in the maturation of [NiFe] hydrogenases. Required for nickel insertion into the metal center of the hydrogenase. The protein is Hydrogenase maturation factor HypA of Synechococcus sp. (strain JA-2-3B'a(2-13)) (Cyanobacteria bacterium Yellowstone B-Prime).